The primary structure comprises 237 residues: Ribonuclease PH (237 aa).

Residues Arg86 and 124–126 (GTR) contribute to the phosphate site.

Belongs to the RNase PH family. As to quaternary structure, homohexameric ring arranged as a trimer of dimers.

The catalysed reaction is tRNA(n+1) + phosphate = tRNA(n) + a ribonucleoside 5'-diphosphate. Phosphorolytic 3'-5' exoribonuclease that plays an important role in tRNA 3'-end maturation. Removes nucleotide residues following the 3'-CCA terminus of tRNAs; can also add nucleotides to the ends of RNA molecules by using nucleoside diphosphates as substrates, but this may not be physiologically important. Probably plays a role in initiation of 16S rRNA degradation (leading to ribosome degradation) during starvation. In Pseudoalteromonas translucida (strain TAC 125), this protein is Ribonuclease PH.